The chain runs to 2615 residues: Probable serine/threonine-protein kinase roco7 (2615 aa).

Residues 1 to 13 (MDGYSSLSSSGNS) are compositionally biased toward low complexity. Disordered regions lie at residues 1-35 (MDGY…NYNQ), 275-297 (STPT…NSNN), 533-623 (QNIN…GGLN), and 946-998 (SSSS…ISEQ). 3 stretches are compositionally biased toward low complexity: residues 533 to 560 (QNIN…SSRS), 567 to 614 (NSST…NNNN), and 946 to 996 (SSSS…SNIS). Residues 1441–1631 (SVKEAYARNK…LCIWQNGMVL (191 aa)) enclose the COR domain. Residues 1775–2042 (LKFGPQLGSG…ERLSTMQKTF (268 aa)) enclose the Protein kinase domain. Residues 1781–1789 (LGSGSYANV) and K1802 each bind ATP. D1899 (proton acceptor) is an active-site residue. Disordered stretches follow at residues 2061–2158 (QINQ…SHSG) and 2176–2209 (GIGS…YESG). 2 stretches are compositionally biased toward low complexity: residues 2073 to 2158 (SQAA…SHSG) and 2182 to 2209 (NQHQ…YESG). WD repeat units follow at residues 2491-2527 (GIIK…LVWD) and 2533-2574 (RMVQ…TTYS).

The protein belongs to the protein kinase superfamily. TKL Ser/Thr protein kinase family. ROCO subfamily.

It catalyses the reaction L-seryl-[protein] + ATP = O-phospho-L-seryl-[protein] + ADP + H(+). It carries out the reaction L-threonyl-[protein] + ATP = O-phospho-L-threonyl-[protein] + ADP + H(+). The polypeptide is Probable serine/threonine-protein kinase roco7 (roco7) (Dictyostelium discoideum (Social amoeba)).